The following is a 313-amino-acid chain: Malate dehydrogenase (313 aa).

11-16 (GAGHTG) provides a ligand contact to NAD(+). R86 and R92 together coordinate substrate. Residues N99 and 122–124 (LTN) each bind NAD(+). Substrate contacts are provided by N124 and R155. The active-site Proton acceptor is H179.

The protein belongs to the LDH/MDH superfamily. MDH type 3 family.

It carries out the reaction (S)-malate + NAD(+) = oxaloacetate + NADH + H(+). Functionally, catalyzes the reversible oxidation of malate to oxaloacetate. The chain is Malate dehydrogenase from Staphylococcus epidermidis (strain ATCC 35984 / DSM 28319 / BCRC 17069 / CCUG 31568 / BM 3577 / RP62A).